The chain runs to 481 residues: UDP-glucose 6-dehydrogenase 1 (481 aa).

Residues 8–13 (GAGYVG), Asp33, Arg38, 86–90 (VNTPT), 127–128 (ST), and Glu161 each bind NAD(+). Substrate is bound by residues 157 to 161 (EFLAE), 216 to 223 (KLAANAFL), and 256 to 269 (RIGP…VGFG). Cys272 (nucleophile) is an active-site residue. Position 272 to 275 (272 to 275 (CFQK)) interacts with NAD(+). Residue 334–335 (FK) coordinates substrate. An NAD(+)-binding site is contributed by Arg342. A substrate-binding site is contributed by Arg448.

It belongs to the UDP-glucose/GDP-mannose dehydrogenase family.

The enzyme catalyses UDP-alpha-D-glucose + 2 NAD(+) + H2O = UDP-alpha-D-glucuronate + 2 NADH + 3 H(+). It functions in the pathway nucleotide-sugar biosynthesis; UDP-alpha-D-glucuronate biosynthesis; UDP-alpha-D-glucuronate from UDP-alpha-D-glucose: step 1/1. Its activity is regulated as follows. Inhibited by UDP-xylose. Involved in the biosynthesis of UDP-glucuronic acid (UDP-GlcA), providing nucleotide sugars for cell-wall polymers. The polypeptide is UDP-glucose 6-dehydrogenase 1 (UGD1) (Arabidopsis thaliana (Mouse-ear cress)).